The sequence spans 353 residues: F-box protein At3g58530 (353 aa).

The F-box; degenerate domain maps to 8–56 (EEEEETWRREIVTSVMRLVSTRLPQTDLISLLLVSPWLYRTLISYPSIW).

This chain is F-box protein At3g58530, found in Arabidopsis thaliana (Mouse-ear cress).